Reading from the N-terminus, the 272-residue chain is Dermonecrotic toxin LvSicTox-alphaIC1bii (272 aa).

Histidine 5 is a catalytic residue. Residues glutamate 25 and aspartate 27 each coordinate Mg(2+). Histidine 41 serves as the catalytic Nucleophile. Disulfide bonds link cysteine 45–cysteine 51 and cysteine 47–cysteine 189. Aspartate 84 lines the Mg(2+) pocket.

It belongs to the arthropod phospholipase D family. Class II subfamily. Requires Mg(2+) as cofactor. Expressed by the venom gland.

The protein resides in the secreted. It carries out the reaction an N-(acyl)-sphingosylphosphocholine = an N-(acyl)-sphingosyl-1,3-cyclic phosphate + choline. It catalyses the reaction an N-(acyl)-sphingosylphosphoethanolamine = an N-(acyl)-sphingosyl-1,3-cyclic phosphate + ethanolamine. The enzyme catalyses a 1-acyl-sn-glycero-3-phosphocholine = a 1-acyl-sn-glycero-2,3-cyclic phosphate + choline. The catalysed reaction is a 1-acyl-sn-glycero-3-phosphoethanolamine = a 1-acyl-sn-glycero-2,3-cyclic phosphate + ethanolamine. Its function is as follows. Dermonecrotic toxins cleave the phosphodiester linkage between the phosphate and headgroup of certain phospholipids (sphingolipid and lysolipid substrates), forming an alcohol (often choline) and a cyclic phosphate. This toxin acts on sphingomyelin (SM). It may also act on ceramide phosphoethanolamine (CPE), lysophosphatidylcholine (LPC) and lysophosphatidylethanolamine (LPE), but not on lysophosphatidylserine (LPS), and lysophosphatidylglycerol (LPG). It acts by transphosphatidylation, releasing exclusively cyclic phosphate products as second products. Induces dermonecrosis, hemolysis, increased vascular permeability, edema, inflammatory response, and platelet aggregation. This is Dermonecrotic toxin LvSicTox-alphaIC1bii from Loxosceles variegata (Recluse spider).